The following is a 2563-amino-acid chain: MNNTPAVTATATATATATAMAGSACSNTSTPIAIVGMGCRFAGDATSPQKLWEMVERGGSAWSKVPSSRFNVRGVYHPNGERVGSTHVKGGHFIDEDPALFDAAFFNMTTEVASCMDPQYRLMLEVVYESLESAGITIDGMAGSNTSVFGGVMYHDYQDSLNRDPETVPRYFITGNSGTMLSNRISHFYDLRGPSVTVDTACSTTLTALHLACQSLRTGESDTAIVIGANLLLNPDVFVTMSNLGFLSPDGISYSFDPRANGYGRGEGIAALVIKALPNALRDQDPIRAVIRETALNQDGKTPAITAPSDVAQKSLIQECYDKAGLDMSLTSYVEAHGTGTPTGDPLEISAISAAFKGHPLHLGSVKANIGHTEAASGLASIIKVALALEKGLIPPNARFLQKNSKLMLDQKNIKIPMSAQDWPVKDGTRRASVNNFGFGGSNAHVILESYDRASLALPEDQVHVNGNSEHGRVEDGSKQSRIYVVRAKDEQACRRTIASLRDYIKSVADIDGEPFLASLAYTLGSRRSILPWTSVYVADSLGGLVSALSDESNQPKRANEKVRLGFVFTGQGAQWHAMGRELVNTFPVFKQAILECDGYIKQLGASWNFMEELHRDELTTRVNDAEYSLPLSTAIQIALVRLLWSWGIRPTGITSHSSGEAAAAYAAGALSARSAIGITYIRGVLTTKPKPALAAKGGMMAVGLGRSETNVYISRLNQEDGCVVVGCINSQCSVTVSGDLGAIEKLEKLLHADGIFTRKLKVTEAFHSSHMRPMADAFGASLRDLFNSDNNNDNPNADTSKGVLYSSPKTGSRMTDLKLLLDPTHWMDSMLQPVEFESSLREMCFDPNTKEKAVDVIIEIGPHGALGGPINQVMQDLGLKGTDINYLSCLSRGRSSLETMYRAATELISKGYGLKMDAINFPHGRKEPRVKVLSDLPAYPWNHQTRYWREPRGSRESKQRTHPPHTLIGSRESLSPQFAPKWKHVLRLSDIPWIRDHVVGSSIIFPGAGFISMAIEGFSQVCPPVAGASINYNLRDVELAQALIIPADAEAEVDLRLTIRSCEERSLGTKNWHQFSVHSISGENNTWTEHCTGLIRSESERSHLDCSTVEASRRLNLGSDNRSIDPNDLWESLHANGICHGPIFQNIQRIQNNGQGSFCRFSIADTASAMPHSYENRHIVHPTTLDSVIQAAYTVLPYAGTRMKTAMVPRRLRNVKISSSLADLEAGDALDAQASIKDRNSQSFSTDLAVFDDYDSGSSPSDGIPVIEIEGLVFQSVGSSFSDQKSDSNDTENACSSWVWAPDISLGDSTWLKEKLSTEAETKETELMMDLRRCTINFIQEAVTDLTNSDIQHLDGHLQKYFDWMNVQLDLARQNKLSPASCDWLSDDAEQKKCLQARVAGESVNGEMISRLGPQLIAMLRRETEPLELMMQDQLLSRYYVNAIKWSRSNAQASELIRLCAHKNPRSRILEIGGGTGGCTKLIVNALGNTKPIDRYDFTDVSAGFFESAREQFADWQDVMTFKKLDIESDPEQQGFECATYDVVVACQVLHATRCMKRTLSNVRKLLKPGGNLILVETTRDQLDLFFTFGLLPGWWLSEEPERKSTPSLTTDLWNTMLDTSGFNGVELEVRDCEDDEFYMISTMLSTARKENTTPDTVAESEVLLLHGALRPPSSWLESLQAAICEKTSSSPSINALGEVDTTGRTCIFLGEMESSLLGEVGSETFKSITAMLNNCNALLWVSRGAAMSSEDPWKALHIGLLRTIRNENNGKEYVSLDLDPSRNAYTHESLYAICNIFNGRLGDLSEDKEFEFAERNGVIHVPRLFNDPHWKDQEAVEVTLQPFEQPGRRLRMEVETPGLLDSLQFRDDEGREGKDLPDDWVEIEPKAFGLNFRDVMVAMGQLEANRVMGFECAGVITKLGGAAAASQGLRLGDRVCALLKGHWATRTQTPYTNVVRIPDEMGFPEAASVPLAFTTAYIALYTTAKLRRGERVLIHSGAGGVGQAAIILSQLAGAEVFVTAGTQAKRDFVGDKFGINPDHIFSSRNDLFVDGIKAYTGGLGVHVVLNSLAGQLLQASFDCMAEFGRFVEIGKKDLEQNSRLDMLPFTRDVSFTSIDLLSWQRAKSEEVSEALNHVTKLLETKAIGLIGPIQQHSLSNIEKAFRTMQSGQHVGKVVVNVSGDELVPVGDGGFSLKLKPDSSYLVAGGLGGIGKQICQWLVDHGAKHLIILSRSAKASPFITSLQNQQCAVYLHACDISDQDQVTKVLRLCEEAHAPPIRGIIQGAMVLKDALLSRMTLDEFNAATRPKVQGSWYLHKIAQDVDFFVMLSSLVGVMGGAGQANYAAAGAFQDALAHHRRAHGMPAVTIDLGMVKSVGYVAETGRGVADRLARIGYKPMHEKDVMDVLEKAILCSSPQFPSPPAAVVTGINTSPGAHWTEANWIQEQRFVGLKYRQVLHADQSFVSSHKKGPDGVRAQLSRVTSHDEAISIVLKAMTEKLMRMFGLAEDDMSSSKNLAGVGVDSLVAIELRNWITSEIHVDVSIFELMNGNTIAGLVELVVAKCS.

The Ketosynthase family 3 (KS3) domain maps to 29 to 450 (STPIAIVGMG…GSNAHVILES (422 aa)). Residues C202, H337, and H372 each act as for beta-ketoacyl synthase activity in the active site. Positions 568–915 (VFTGQGAQWH…TELISKGYGL (348 aa)) are acyl and malonyl transferase. S658 functions as the For malonyltransferase activity in the catalytic mechanism. Over residues 951–960 (EPRGSRESKQ) the composition is skewed to basic and acidic residues. Residues 951 to 971 (EPRGSRESKQRTHPPHTLIGS) form a disordered region. The tract at residues 966-1103 (HTLIGSRESL…GLIRSESERS (138 aa)) is N-terminal hotdog fold. The 319-residue stretch at 966 to 1284 (HTLIGSRESL…FQSVGSSFSD (319 aa)) folds into the PKS/mFAS DH domain. H998 (proton acceptor; for dehydratase activity) is an active-site residue. The segment at 998-1010 (HVVGSSIIFPGAG) is dehydratase-like. Positions 1121–1284 (DNRSIDPNDL…FQSVGSSFSD (164 aa)) are C-terminal hotdog fold. D1187 acts as the Proton donor; for dehydratase activity in catalysis. The tract at residues 1542–1579 (YDVVVACQVLHATRCMKRTLSNVRKLLKPGGNLILVET) is methyltransferase. Residues 2485–2562 (EAISIVLKAM…GLVELVVAKC (78 aa)) form the Carrier domain. Residue S2522 is modified to O-(pantetheine 4'-phosphoryl)serine.

The cofactor is pantetheine 4'-phosphate.

The enzyme catalyses holo-[2-methylbutanoate polyketide synthase] + 2 malonyl-CoA + S-adenosyl-L-methionine + 2 NADPH + 3 H(+) = (S)-2-methylbutanoyl-[2-methylbutanoate polyketide synthase] + S-adenosyl-L-homocysteine + 2 CO2 + 2 NADP(+) + 2 CoA + H2O. It participates in polyketide biosynthesis. Functionally, diketide synthase; part of the gene cluster that mediates the biosynthesis of compactin, also known as mevastatin or ML-236B, and which acts as a potent competitive inhibitor of HMG-CoA reductase. Compactin biosynthesis is performed in two stages. The first stage is catalyzed by the nonaketide synthase mlcA, which belongs to type I polyketide synthases and catalyzes the iterative nine-step formation of the polyketide. This PKS stage is completed by the action of dehydrogenase mlcG, which catalyzes the NADPH-dependent reduction of the unsaturated tetra-, penta- and heptaketide intermediates that arise during the mlcA-mediated biosynthesis of the nonaketide chain and leads to dihydro-ML-236C carboxylate. Covalently bound dihydro-ML-236C carboxylate is released from mlcA by the mlcF esterase. Conversion of dihydro-ML-236C carboxylate into ML-236A carboxylate is subsequently performed with the participation of molecular oxygen and P450 monoogygenase mlcC. Finally, mlcH performs the conversion of ML-236A carboxylate to ML-236B/compactin carboxylate through the addition of the side-chain diketide moiety produced by the diketide synthase mlcB. In Penicillium citrinum, this protein is Compactin diketide synthase mlcB (mlcB).